The sequence spans 128 residues: Putative lipid-binding protein At4g00165 (128 aa).

The N-terminal stretch at 1-23 is a signal peptide; sequence MGISKALRSLLILLLLNITFFFG. 4 disulfides stabilise this stretch: Cys34/Cys90, Cys46/Cys76, Cys56/Cys75, and Cys92/Cys128.

It belongs to the plant LTP family. PEARLI1 subfamily.

The protein localises to the secreted. The sequence is that of Putative lipid-binding protein At4g00165 from Arabidopsis thaliana (Mouse-ear cress).